The sequence spans 134 residues: Small ribosomal subunit protein bS6 (134 aa).

Residues 99–134 (EPSAMMQKRDRDERKDRERGRRRDDDGYVGERNEEG) are disordered. The span at 105–134 (QKRDRDERKDRERGRRRDDDGYVGERNEEG) shows a compositional bias: basic and acidic residues.

It belongs to the bacterial ribosomal protein bS6 family.

In terms of biological role, binds together with bS18 to 16S ribosomal RNA. The polypeptide is Small ribosomal subunit protein bS6 (Methylobacterium sp. (strain 4-46)).